Reading from the N-terminus, the 122-residue chain is ORF7a protein (122 aa).

A signal peptide spans Met1–Cys15. Residues Glu16–Ser81 form the X4e domain. At Glu16 to Glu96 the chain is on the virion surface side. 2 disulfide bridges follow: Cys23–Cys58 and Cys35–Cys67. The chain crosses the membrane as a helical span at residues Leu97–Ile117. Residues Lys118 to Glu122 lie on the Intravirion side of the membrane. The Di-lysine motif signature appears at Lys118–Glu122.

Interacts with the spike glycoprotein. Interacts with M protein. Interacts with E protein. Interacts with the ORF3a protein. Interacts with human SGT. Interacts with host ITGAL. Interacts with host BST2.

It is found in the virion. It localises to the host endoplasmic reticulum membrane. The protein resides in the host endoplasmic reticulum-Golgi intermediate compartment membrane. The protein localises to the host Golgi apparatus membrane. Plays a role as antagonist of host tetherin (BST2), disrupting its antiviral effect. Acts by binding to BST2 thereby interfering with its glycosylation. May suppress small interfering RNA (siRNA). May bind to host ITGAL, thereby playing a role in attachment or modulation of leukocytes. In Severe acute respiratory syndrome coronavirus (SARS-CoV), this protein is ORF7a protein.